We begin with the raw amino-acid sequence, 431 residues long: Glutamyl-tRNA reductase (431 aa).

Substrate contacts are provided by residues 49–52, S109, 114–116, and Q120; these read TCDR and EPH. C50 (nucleophile) is an active-site residue. 189-194 provides a ligand contact to NADP(+); sequence GTQEMG.

Belongs to the glutamyl-tRNA reductase family. Homodimer.

It catalyses the reaction (S)-4-amino-5-oxopentanoate + tRNA(Glu) + NADP(+) = L-glutamyl-tRNA(Glu) + NADPH + H(+). Its pathway is porphyrin-containing compound metabolism; protoporphyrin-IX biosynthesis; 5-aminolevulinate from L-glutamyl-tRNA(Glu): step 1/2. The protein operates within porphyrin-containing compound metabolism; chlorophyll biosynthesis. Functionally, catalyzes the NADPH-dependent reduction of glutamyl-tRNA(Glu) to glutamate 1-semialdehyde (GSA). This is Glutamyl-tRNA reductase from Rhodospirillum rubrum (strain ATCC 11170 / ATH 1.1.1 / DSM 467 / LMG 4362 / NCIMB 8255 / S1).